A 532-amino-acid polypeptide reads, in one-letter code: Phosphoenolpyruvate carboxykinase (ATP) (532 aa).

Positions 60, 194, and 200 each coordinate substrate. Residues Lys200, His219, and 237–245 each bind ATP; that span reads GLSGTGKTT. The Mn(2+) site is built by Lys200 and His219. Residue Asp258 participates in Mn(2+) binding. ATP is bound by residues Glu286, Arg324, and Thr449. Arg324 is a binding site for substrate.

It belongs to the phosphoenolpyruvate carboxykinase (ATP) family. Mn(2+) is required as a cofactor.

It localises to the cytoplasm. It catalyses the reaction oxaloacetate + ATP = phosphoenolpyruvate + ADP + CO2. It participates in carbohydrate biosynthesis; gluconeogenesis. Involved in the gluconeogenesis. Catalyzes the conversion of oxaloacetate (OAA) to phosphoenolpyruvate (PEP) through direct phosphoryl transfer between the nucleoside triphosphate and OAA. In Cereibacter sphaeroides (strain ATCC 17029 / ATH 2.4.9) (Rhodobacter sphaeroides), this protein is Phosphoenolpyruvate carboxykinase (ATP).